The primary structure comprises 191 residues: MKLDVFAGQEKSELSMIEVARAILEERGRDNEMYFSDLVNEIQNYLGKSDAGIRHALPFFYTDLNTDGSFIPLGENKWGLRSWYAIDEIDEEIITLEEDEDGAQKRKKKRVNAFVDGDEDAIDYRDDDPEDEDFTEESAEVEYDEEDPDDEKSEVESYDSELNEIIPEDDFEEVDINEEDEEDEEDEEPVL.

Residues 14 to 83 (LSMIEVARAI…GENKWGLRSW (70 aa)) enclose the HTH HARE-type domain. The interval 119-191 (EDAIDYRDDD…EDEEDEEPVL (73 aa)) is disordered.

In terms of assembly, RNAP is composed of a core of 2 alpha, a beta and a beta' subunits. The core is associated with a delta subunit and one of several sigma factors.

In terms of biological role, participates in both the initiation and recycling phases of transcription. In the presence of the delta subunit, RNAP displays an increased specificity of transcription, a decreased affinity for nucleic acids, and an increased efficiency of RNA synthesis because of enhanced recycling. This chain is Probable DNA-directed RNA polymerase subunit delta, found in Streptococcus pyogenes serotype M6 (strain ATCC BAA-946 / MGAS10394).